We begin with the raw amino-acid sequence, 199 residues long: Superoxide dismutase [Mn/Fe] (199 aa).

His-27, His-81, Asp-161, and His-165 together coordinate Fe(3+). Residues His-27, His-81, Asp-161, and His-165 each coordinate Mn(2+).

This sequence belongs to the iron/manganese superoxide dismutase family. In terms of assembly, homodimer. Requires Mn(2+) as cofactor. Fe(3+) is required as a cofactor.

The enzyme catalyses 2 superoxide + 2 H(+) = H2O2 + O2. Functionally, destroys superoxide anion radicals which are normally produced within the cells and which are toxic to biological systems. Catalyzes the dismutation of superoxide anion radicals into O2 and H2O2 by successive reduction and oxidation of the transition metal ion at the active site. The chain is Superoxide dismutase [Mn/Fe] (sodA) from Staphylococcus haemolyticus (strain JCSC1435).